Here is a 647-residue protein sequence, read N- to C-terminus: Threonine--tRNA ligase (647 aa).

Residues 1–61 (MIKITFPDGA…TEDGSIEIVT (61 aa)) enclose the TGS domain. The catalytic stretch occupies residues 242–540 (DHRKLGKELD…LIENYKGAFP (299 aa)). Residues C336, H387, and H517 each contribute to the Zn(2+) site.

Belongs to the class-II aminoacyl-tRNA synthetase family. Homodimer. The cofactor is Zn(2+).

It localises to the cytoplasm. The catalysed reaction is tRNA(Thr) + L-threonine + ATP = L-threonyl-tRNA(Thr) + AMP + diphosphate + H(+). Functionally, catalyzes the attachment of threonine to tRNA(Thr) in a two-step reaction: L-threonine is first activated by ATP to form Thr-AMP and then transferred to the acceptor end of tRNA(Thr). Also edits incorrectly charged L-seryl-tRNA(Thr). The protein is Threonine--tRNA ligase of Streptococcus gordonii (strain Challis / ATCC 35105 / BCRC 15272 / CH1 / DL1 / V288).